Here is a 552-residue protein sequence, read N- to C-terminus: Iduronate 2-sulfatase (552 aa).

The first 29 residues, 1 to 29 (MSPPPPPPIWRQLSFSLLLGSFCIALESA), serve as a signal peptide directing secretion. The propeptide occupies 30–35 (AQGNSA). Positions 47, 48, and 86 each coordinate Ca(2+). The active-site Nucleophile is the Cys-86. A 3-oxoalanine (Cys) modification is found at Cys-86. Asn-117 carries N-linked (GlcNAc...) asparagine glycosylation. His-140 is an active-site residue. Residue Asn-146 is glycosylated (N-linked (GlcNAc...) asparagine). A disulfide bridge connects residues Cys-173 and Cys-186. 2 N-linked (GlcNAc...) asparagine glycosylation sites follow: Asn-248 and Asn-282. Ca(2+) contacts are provided by Asp-336 and His-337. Cysteines 424 and 434 form a disulfide. 2 N-linked (GlcNAc...) asparagine glycosylation sites follow: Asn-515 and Asn-539.

The protein belongs to the sulfatase family. As to quaternary structure, monomer. The 58-kDa mature form is composed of two chains resulting from proteolitic processing, the 42-kDa chain and the 14-kDa chain that remain stably associated and form the 58-kDa intermediate form which is enzymatically active. It depends on Ca(2+) as a cofactor. In terms of processing, synthesized as a 75-kDa precursor form in the endoplasmic reticulum (ER), and then processed by proteolytic cleavage through various intermediates to yield a 55-kDa mature form, with the release of an 18 kDa polypeptide. Post-translationally, the conversion to 3-oxoalanine (also known as C-formylglycine, FGly), of a serine or cysteine residue in prokaryotes and of a cysteine residue in eukaryotes, is critical for catalytic activity. In terms of tissue distribution, found to be expressed in alpha and beta pancreatic cells.

It localises to the lysosome. The enzyme catalyses Hydrolysis of the 2-sulfate groups of the L-iduronate 2-sulfate units of dermatan sulfate, heparan sulfate and heparin.. In terms of biological role, lysosomal enzyme involved in the degradation pathway of dermatan sulfate and heparan sulfate. This chain is Iduronate 2-sulfatase (Ids), found in Mus musculus (Mouse).